A 192-amino-acid polypeptide reads, in one-letter code: GTP cyclohydrolase 1 (192 aa).

The Zn(2+) site is built by Cys-82, His-85, and Cys-153.

Belongs to the GTP cyclohydrolase I family. Toroid-shaped homodecamer, composed of two pentamers of five dimers.

It carries out the reaction GTP + H2O = 7,8-dihydroneopterin 3'-triphosphate + formate + H(+). It participates in cofactor biosynthesis; 7,8-dihydroneopterin triphosphate biosynthesis; 7,8-dihydroneopterin triphosphate from GTP: step 1/1. This is GTP cyclohydrolase 1 from Rickettsia bellii (strain OSU 85-389).